The following is a 459-amino-acid chain: GTPase Der (459 aa).

2 consecutive EngA-type G domains span residues 3–167 and 188–363; these read FTFA…PEPE and IRVA…AVWN. GTP-binding positions include 9–16, 56–60, 119–122, 194–201, 241–245, and 306–309; these read GRPNVGKS, DTAGL, NKSE, GRPNAGKS, and NKWD. Positions 364–448 constitute a KH-like domain; it reads TRVSTAALNR…PVRITLREKA (85 aa).

This sequence belongs to the TRAFAC class TrmE-Era-EngA-EngB-Septin-like GTPase superfamily. EngA (Der) GTPase family. As to quaternary structure, associates with the 50S ribosomal subunit.

In terms of biological role, GTPase that plays an essential role in the late steps of ribosome biogenesis. The chain is GTPase Der from Rhodopseudomonas palustris (strain HaA2).